A 306-amino-acid chain; its full sequence is tRNA pseudouridine synthase B (306 aa).

The active-site Nucleophile is Asp-48.

It belongs to the pseudouridine synthase TruB family. Type 1 subfamily.

The catalysed reaction is uridine(55) in tRNA = pseudouridine(55) in tRNA. In terms of biological role, responsible for synthesis of pseudouridine from uracil-55 in the psi GC loop of transfer RNAs. The polypeptide is tRNA pseudouridine synthase B (Haemophilus influenzae (strain 86-028NP)).